A 159-amino-acid polypeptide reads, in one-letter code: Eukaryotic translation initiation factor 5A-1 (159 aa).

Basic and acidic residues predominate over residues Met-1 to Ala-12. Positions Met-1 to Gln-23 are disordered. Lys-52 carries the hypusine modification.

This sequence belongs to the eIF-5A family. Post-translationally, lys-52 undergoes hypusination, a unique post-translational modification that consists in the addition of a butylamino group from spermidine to lysine side chain, leading to the formation of the unusual amino acid hypusine. eIF-5As are the only known proteins to undergo this modification, which is essential for their function.

Functionally, translation factor that promotes translation elongation and termination, particularly upon ribosome stalling at specific amino acid sequence contexts. Binds between the exit (E) and peptidyl (P) site of the ribosome and promotes rescue of stalled ribosome: specifically required for efficient translation of polyproline-containing peptides as well as other motifs that stall the ribosome. Acts as a ribosome quality control (RQC) cofactor by joining the RQC complex to facilitate peptidyl transfer during CAT tailing step. The protein is Eukaryotic translation initiation factor 5A-1 of Solanum lycopersicum (Tomato).